Here is a 220-residue protein sequence, read N- to C-terminus: ATP-dependent dethiobiotin synthetase BioD (220 aa).

12–17 is an ATP binding site; sequence DVGKTI. A Mg(2+)-binding site is contributed by Thr16. Lys37 is an active-site residue. Thr41 is a substrate binding site. ATP is bound by residues Asp49, 107–110, 167–168, and 197–199; these read EGAG, GS, and PAG. Mg(2+) contacts are provided by Asp49 and Glu107.

This sequence belongs to the dethiobiotin synthetase family. In terms of assembly, homodimer. The cofactor is Mg(2+).

It localises to the cytoplasm. The catalysed reaction is (7R,8S)-7,8-diammoniononanoate + CO2 + ATP = (4R,5S)-dethiobiotin + ADP + phosphate + 3 H(+). The protein operates within cofactor biosynthesis; biotin biosynthesis; biotin from 7,8-diaminononanoate: step 1/2. Catalyzes a mechanistically unusual reaction, the ATP-dependent insertion of CO2 between the N7 and N8 nitrogen atoms of 7,8-diaminopelargonic acid (DAPA, also called 7,8-diammoniononanoate) to form a ureido ring. The polypeptide is ATP-dependent dethiobiotin synthetase BioD (Corynebacterium efficiens (strain DSM 44549 / YS-314 / AJ 12310 / JCM 11189 / NBRC 100395)).